The following is a 331-amino-acid chain: Fructose-1,6-bisphosphatase class 1 (331 aa).

Residues Glu-100, Asp-120, Leu-122, and Asp-123 each coordinate Mg(2+). Substrate contacts are provided by residues 123 to 126 (DGSS), Asn-216, Tyr-243, 261 to 263 (YLY), and Lys-273. Glu-279 provides a ligand contact to Mg(2+).

Belongs to the FBPase class 1 family. As to quaternary structure, homotetramer. Mg(2+) serves as cofactor.

The protein resides in the cytoplasm. The catalysed reaction is beta-D-fructose 1,6-bisphosphate + H2O = beta-D-fructose 6-phosphate + phosphate. It functions in the pathway carbohydrate biosynthesis; gluconeogenesis. The chain is Fructose-1,6-bisphosphatase class 1 from Amoebophilus asiaticus (strain 5a2).